A 1096-amino-acid polypeptide reads, in one-letter code: Carbamoyl phosphate synthase large chain (1096 aa).

A carboxyphosphate synthetic domain region spans residues 1–402; that stretch reads MPKRDDINSV…ALQKALRSLE (402 aa). Residues R129, R169, G175, G176, E208, I210, E215, G241, V242, H243, Q285, and E299 each contribute to the ATP site. The ATP-grasp 1 domain occupies 133–328; it reads KDLVIESGAD…IAKIAAKLAI (196 aa). Mg(2+)-binding residues include Q285, E299, and N301. Residues Q285, E299, and N301 each coordinate Mn(2+). Positions 403–547 are oligomerization domain; it reads KRGSSFHWGA…YSSYDSETEI (145 aa). Residues 548–950 form a carbamoyl phosphate synthetic domain region; that stretch reads VPSDRRKVII…AFAKSQEAAF (403 aa). The ATP-grasp 2 domain maps to 676-870; that stretch reads SGILDAAGLV…LAKAASLVMV (195 aa). The ATP site is built by R712, R754, L756, E761, G786, I787, H788, S789, Q829, and E841. Mg(2+) contacts are provided by Q829, E841, and N843. Mn(2+) is bound by residues Q829, E841, and N843. An MGS-like domain is found at 951-1095; the sequence is GGLPLSGTVF…QDYAIAREAR (145 aa). The interval 951–1096 is allosteric domain; that stretch reads GGLPLSGTVF…DYAIAREARR (146 aa).

It belongs to the CarB family. In terms of assembly, composed of two chains; the small (or glutamine) chain promotes the hydrolysis of glutamine to ammonia, which is used by the large (or ammonia) chain to synthesize carbamoyl phosphate. Tetramer of heterodimers (alpha,beta)4. Requires Mg(2+) as cofactor. Mn(2+) is required as a cofactor.

The catalysed reaction is hydrogencarbonate + L-glutamine + 2 ATP + H2O = carbamoyl phosphate + L-glutamate + 2 ADP + phosphate + 2 H(+). It carries out the reaction hydrogencarbonate + NH4(+) + 2 ATP = carbamoyl phosphate + 2 ADP + phosphate + 2 H(+). Its pathway is amino-acid biosynthesis; L-arginine biosynthesis; carbamoyl phosphate from bicarbonate: step 1/1. It functions in the pathway pyrimidine metabolism; UMP biosynthesis via de novo pathway; (S)-dihydroorotate from bicarbonate: step 1/3. Its function is as follows. Large subunit of the glutamine-dependent carbamoyl phosphate synthetase (CPSase). CPSase catalyzes the formation of carbamoyl phosphate from the ammonia moiety of glutamine, carbonate, and phosphate donated by ATP, constituting the first step of 2 biosynthetic pathways, one leading to arginine and/or urea and the other to pyrimidine nucleotides. The large subunit (synthetase) binds the substrates ammonia (free or transferred from glutamine from the small subunit), hydrogencarbonate and ATP and carries out an ATP-coupled ligase reaction, activating hydrogencarbonate by forming carboxy phosphate which reacts with ammonia to form carbamoyl phosphate. The polypeptide is Carbamoyl phosphate synthase large chain (Clavibacter sepedonicus (Clavibacter michiganensis subsp. sepedonicus)).